The chain runs to 981 residues: Serine/threonine-protein kinase D1044.8 (981 aa).

In terms of domain architecture, Protein kinase spans 453 to 725 (YELLDQLGAG…MCGVRLLEYL (273 aa)). ATP contacts are provided by residues 459 to 467 (LGAGAFGCV) and K488. Catalysis depends on D591, which acts as the Proton acceptor. A compositionally biased stretch (polar residues) spans 735–746 (TSDMTASQSSYN). Disordered stretches follow at residues 735-802 (TSDM…PSSI) and 823-847 (IPSRRRVQTCSTEHPARSSSSTELK). A compositionally biased stretch (low complexity) spans 752-762 (SPSSLNSSTSS). The segment covering 830-847 (QTCSTEHPARSSSSTELK) has biased composition (polar residues).

Belongs to the protein kinase superfamily. NEK Ser/Thr protein kinase family. NIMA subfamily. Requires Mg(2+) as cofactor.

It carries out the reaction L-seryl-[protein] + ATP = O-phospho-L-seryl-[protein] + ADP + H(+). The catalysed reaction is L-threonyl-[protein] + ATP = O-phospho-L-threonyl-[protein] + ADP + H(+). The sequence is that of Serine/threonine-protein kinase D1044.8 (nekl-4) from Caenorhabditis elegans.